The following is a 1605-amino-acid chain: Ribosome-binding protein 1 (1605 aa).

Residues 1-7 lie on the Lumenal side of the membrane; it reads MDIYDTQ. The chain crosses the membrane as a helical span at residues 8–28; that stretch reads TLGVVVFGGFMVVSAIGIFLV. The Cytoplasmic portion of the chain corresponds to 29-1605; it reads STFSMKETSY…GSSSKEGTSV (1577 aa). The segment at 44-88 is disordered; it reads NQRKEMAKTHHQKGEKKKKEKTVEKKGKTKKKEEKPNGKIPEHDL. A compositionally biased stretch (basic residues) spans 52 to 63; that stretch reads THHQKGEKKKKE. Positions 64–88 are enriched in basic and acidic residues; the sequence is KTVEKKGKTKKKEEKPNGKIPEHDL. Phosphoserine is present on serine 111. The tract at residues 114 to 150 is disordered; the sequence is SSVGHTPIATVPAMPQEKLASSPKDRKKKEKKVAKVE. Lysine 148 participates in a covalent cross-link: Glycyl lysine isopeptide (Lys-Gly) (interchain with G-Cter in SUMO2). Residues serine 159 and serine 165 each carry the phosphoserine modification. The segment at 172-849 is disordered; the sequence is ATPKEVPMVA…PGPPDCDGPL (678 aa). Tandem repeats lie at residues 196–205, 206–215, 216–225, 226–235, 236–245, 246–255, 256–265, 266–275, 276–285, 286–295, 296–305, 306–315, 316–325, 326–335, 336–345, 346–355, 356–365, 366–375, 376–385, 386–395, 396–405, 406–415, 416–425, 426–435, 436–445, 446–455, 456–465, 466–475, 476–485, 486–495, 496–505, 506–515, 516–525, 527–536, 537–546, 547–556, 557–566, 567–576, 577–586, 587–596, 597–606, 607–616, 617–626, 628–637, 638–647, 648–657, 658–667, 668–677, 678–687, 688–697, 698–707, 708–717, 718–727, 729–738, 739–748, 749–758, 759–768, 769–778, 779–788, 789–798, and 799–808. Positions 196 to 808 are 61 X 10 AA tandem repeats of [NSQ]-[NKQVGA]-[GSAQKRT]-[ASGDTK]-[KGTQSAV]-[KGAED]-[EQVGIPTDMA]-[EGVAS]-[AGVPETNS]-[AQNGPTVS]; it reads SQGKKGQGAQ…QGKKSEMAPA (613 aa). Over residues 197-208 the composition is skewed to low complexity; it reads QGKKGQGAQNQA. 4 stretches are compositionally biased toward polar residues: residues 224-258, 274-338, 354-378, and 385-399; these read AQNQ…QNQA. Positions 420–433 are enriched in basic and acidic residues; sequence KKGEAAQKQDKKIE. 3 stretches are compositionally biased toward polar residues: residues 435–479, 495–519, and 526–540; these read AQNQ…QNQA. The span at 561-574 shows a compositional bias: basic and acidic residues; sequence KKGEAAQKQDKKIE. Composition is skewed to polar residues over residues 576–720 and 736–769; these read AQNQ…QNQG and ASNQ…SPNQ. Position 786 is a phosphoserine (serine 786). Over residues 811 to 821 the composition is skewed to polar residues; it reads QKASMVQSQEA. Residue serine 818 is modified to Phosphoserine. A Glycyl lysine isopeptide (Lys-Gly) (interchain with G-Cter in SUMO1) cross-link involves residue lysine 823. Residue lysine 1135 is modified to N6-acetyllysine. Residues serine 1162 and serine 1178 each carry the phosphoserine modification. Disordered stretches follow at residues 1460–1481 and 1571–1605; these read MRSH…AEQD and TTQE…GTSV. A compositionally biased stretch (basic and acidic residues) spans 1576-1598; it reads LTKEKDTVKKLQEQLGKAEDGSS.

As to expression, widely expressed.

It is found in the endoplasmic reticulum membrane. Functionally, acts as a ribosome receptor and mediates interaction between the ribosome and the endoplasmic reticulum membrane. In Mus musculus (Mouse), this protein is Ribosome-binding protein 1 (Rrbp1).